The following is a 421-amino-acid chain: Fusaric acid cluster transcription factor FUB10 (421 aa).

Positions 16-47 (CDRCRAQKLRCHRDSGHSTDACLRCLKSGIEC) form a DNA-binding region, zn(2)-C6 fungal-type. Residues 50-92 (SKARPTGRPPSRQVQPTVVVEQGDTSSSSHTTDSSPSAGGTDM) are disordered. Residues 74-86 (TSSSSHTTDSSPS) show a composition bias toward low complexity.

The protein resides in the nucleus. Transcription factor that regulates the expression of the gene cluster that mediates the biosynthesis of fusaric acid, a mycotoxin with low to moderate toxicity to animals and humans, but with high phytotoxic properties. The sequence is that of Fusaric acid cluster transcription factor FUB10 from Gibberella moniliformis (strain M3125 / FGSC 7600) (Maize ear and stalk rot fungus).